Here is a 47-residue protein sequence, read N- to C-terminus: MSTDNFEKIKGRPTQKEEWQLKEWEKEKDENNRLFQEQKQKTTNRKG.

Disordered regions lie at residues 1-20 (MSTDNFEKIKGRPTQKEEWQ) and 25-47 (EKEKDENNRLFQEQKQKTTNRKG). Residues 25 to 40 (EKEKDENNRLFQEQKQ) show a composition bias toward basic and acidic residues.

This is an uncharacterized protein from Dictyostelium discoideum (Social amoeba).